The chain runs to 155 residues: Myosin light chain alkali (155 aa).

2 EF-hand domains span residues 7–41 and 80–115; these read REVE…LNLN and GCYE…LGES.

As to quaternary structure, myosin is a hexamer of 2 heavy chains and 4 light chains. As to expression, indirect flight muscle isoform is found only in the indirect flight muscles. The larval and adult isoform is present in the larval and adult musculature.

The chain is Myosin light chain alkali (Mlc1) from Drosophila melanogaster (Fruit fly).